We begin with the raw amino-acid sequence, 489 residues long: Protein LMBR1L (489 aa).

Residues M1–R21 are Extracellular-facing. Positions M1–T59 are interaction with LGB. The tract at residues M1–L76 is LCN1-binding. The chain crosses the membrane as a helical span at residues E22 to T42. Residues R43–E66 lie on the Cytoplasmic side of the membrane. A helical membrane pass occupies residues L67–I87. Over S88 to N114 the chain is Extracellular. A helical transmembrane segment spans residues L115–T135. Over E136–T154 the chain is Cytoplasmic. Residues V155–I175 form a helical membrane-spanning segment. The Extracellular portion of the chain corresponds to V176 to Y196. Residues L197–L217 traverse the membrane as a helical segment. Over A218 to C305 the chain is Cytoplasmic. Residues L306–I326 form a helical membrane-spanning segment. Residues D327–S350 are Extracellular-facing. Residues F351–F371 form a helical membrane-spanning segment. Residues Y372 to S388 lie on the Cytoplasmic side of the membrane. The helical transmembrane segment at M389–F409 threads the bilayer. Residues S410–G431 are Extracellular-facing. A helical transmembrane segment spans residues N432–V452. Residues K453–Q489 are Cytoplasmic-facing.

Belongs to the LIMR family. In terms of assembly, dimer. Can also form higher oligomers. Interacts with LCN1; this interaction mediates the endocytosis of LCN1. Interacts with UBAC2, FAF2, VCP, AMFR, ZNRF3, CTNNB1, LRP6, GSK3B, FZD6, DVL2 and RNF43. Interacts with GSK3A. Interaction with LGB and SCGB1A1 is controversial. Highly expressed in the bone marrow, thymus, spleen and lymphocytes.

It localises to the cell membrane. It is found in the endoplasmic reticulum membrane. Its function is as follows. Plays an essential role in lymphocyte development by negatively regulating the canonical Wnt signaling pathway. In association with UBAC2 and E3 ubiquitin-protein ligase AMFR, promotes the ubiquitin-mediated degradation of CTNNB1 and Wnt receptors FZD6 and LRP6. LMBR1L stabilizes the beta-catenin destruction complex that is required for regulating CTNNB1 levels. Acts as a LCN1 receptor and can mediate its endocytosis. This chain is Protein LMBR1L (Lmbr1l), found in Mus musculus (Mouse).